The following is a 197-amino-acid chain: Probable nicotinate-nucleotide adenylyltransferase (197 aa).

The protein belongs to the NadD family.

The catalysed reaction is nicotinate beta-D-ribonucleotide + ATP + H(+) = deamido-NAD(+) + diphosphate. The protein operates within cofactor biosynthesis; NAD(+) biosynthesis; deamido-NAD(+) from nicotinate D-ribonucleotide: step 1/1. Its function is as follows. Catalyzes the reversible adenylation of nicotinate mononucleotide (NaMN) to nicotinic acid adenine dinucleotide (NaAD). The sequence is that of Probable nicotinate-nucleotide adenylyltransferase from Porphyromonas gingivalis (strain ATCC 33277 / DSM 20709 / CIP 103683 / JCM 12257 / NCTC 11834 / 2561).